Consider the following 40-residue polypeptide: Photosystem II reaction center protein J (40 aa).

A helical membrane pass occupies residues 8-28; sequence IPLWLIGTVAGILIIGLLGVF.

This sequence belongs to the PsbJ family. PSII is composed of 1 copy each of membrane proteins PsbA, PsbB, PsbC, PsbD, PsbE, PsbF, PsbH, PsbI, PsbJ, PsbK, PsbL, PsbM, PsbT, PsbX, PsbY, PsbZ, Psb30/Ycf12, at least 3 peripheral proteins of the oxygen-evolving complex and a large number of cofactors. It forms dimeric complexes.

The protein localises to the plastid. It localises to the chloroplast thylakoid membrane. Its function is as follows. One of the components of the core complex of photosystem II (PSII). PSII is a light-driven water:plastoquinone oxidoreductase that uses light energy to abstract electrons from H(2)O, generating O(2) and a proton gradient subsequently used for ATP formation. It consists of a core antenna complex that captures photons, and an electron transfer chain that converts photonic excitation into a charge separation. The protein is Photosystem II reaction center protein J of Nandina domestica (Heavenly bamboo).